We begin with the raw amino-acid sequence, 109 residues long: Spermidine export protein MdtI (109 aa).

The next 4 membrane-spanning stretches (helical) occupy residues 6–26 (WIHA…NVFL), 36–56 (IYGI…SQAV), 64–84 (AYAL…WVLF), and 88–108 (LNNK…LIKL).

It belongs to the drug/metabolite transporter (DMT) superfamily. Small multidrug resistance (SMR) (TC 2.A.7.1) family. MdtI subfamily. In terms of assembly, forms a complex with MdtJ.

Its subcellular location is the cell inner membrane. In terms of biological role, catalyzes the excretion of spermidine. In Klebsiella pneumoniae subsp. pneumoniae (strain ATCC 700721 / MGH 78578), this protein is Spermidine export protein MdtI.